The following is a 463-amino-acid chain: Mitochondrial dynamics protein MID51 (463 aa).

The Mitochondrial intermembrane segment spans residues 1–23 (MAGAGERKGKKDDNGIGTAIDFV). The helical transmembrane segment at 24–46 (LSNARLVLGVGGAAMLGIATLAV) threads the bilayer. At 47–463 (KRMYDRAISA…LSEPEVLLQT (417 aa)) the chain is on the cytoplasmic side. Residues 49–195 (MYDRAISAPT…LSGSLYDDLQ (147 aa)) are dimerization. 4 positions are modified to phosphoserine: Ser55, Ser59, Ser79, and Ser94. The tract at residues 57–77 (PTSPTRLSHSGKRSWEEPNWM) is disordered. Residues 160–169 (AAVDICAELR) are important for interaction with DNM1L. 3 residues coordinate ADP: Ser187, Ser189, and His201. The important for interaction with DNM1L stretch occupies residues 234 to 243 (RRENPEYFPR). Residues Ser340, Arg342, and Lys368 each contribute to the ADP site.

The protein belongs to the MID49/MID51 family. In terms of assembly, homodimer. Interacts with DNM1L.

It localises to the mitochondrion outer membrane. Its function is as follows. Mitochondrial outer membrane protein which regulates mitochondrial fission/fusion dynamics. Promotes the recruitment and association of the fission mediator dynamin-related protein 1 (DNM1L) to the mitochondrial surface independently of the mitochondrial fission FIS1 and MFF proteins. Regulates DNM1L GTPase activity and DNM1L oligomerization. Binds ADP and can also bind GDP, although with lower affinity. Does not bind CDP, UDP, ATP, AMP or GTP. Inhibits DNM1L GTPase activity in the absence of bound ADP. Requires ADP to stimulate DNM1L GTPase activity and the assembly of DNM1L into long, oligomeric tubules with a spiral pattern, as opposed to the ring-like DNM1L oligomers observed in the absence of bound ADP. Does not require ADP for its function in recruiting DNM1L. This chain is Mitochondrial dynamics protein MID51 (Mief1), found in Rattus norvegicus (Rat).